Here is a 365-residue protein sequence, read N- to C-terminus: Pectate trisaccharide-lyase (365 aa).

The N-terminal stretch at 1–25 is a signal peptide; sequence MRFSRVVSLVLLLVFTAVLTGAVKA. Ca(2+) is bound by residues Asp142, Asp164, and Asp168. The stretch at 149–171 is one PbH1 1 repeat; sequence SHHIWIDHCTFVNGNDGAVDIKK. Arg222 is an active-site residue. Residues 261–287 form a PbH1 2 repeat; the sequence is GAKVHVEGNYFMGYGAVMAEAGIAFLP.

This sequence belongs to the polysaccharide lyase 1 family. In terms of assembly, homotetramer. It depends on Ca(2+) as a cofactor.

The protein resides in the secreted. It catalyses the reaction eliminative cleavage of unsaturated trigalacturonate as the major product from the reducing end of polygalacturonic acid/pectate.. Its function is as follows. Cleaves unsaturated trigalacturonate from pectin. Activity is highest towards polygalacturonic acid, activity on methylated pectins decreases with an increasing degree of methylation. The sequence is that of Pectate trisaccharide-lyase from Thermotoga sp. (strain RQ2).